We begin with the raw amino-acid sequence, 378 residues long: Peptide chain release factor RF2 (378 aa).

Position 253 is an N5-methylglutamine (Gln-253).

It belongs to the prokaryotic/mitochondrial release factor family. In terms of assembly, interacts with the ribosome. Interacts with ribosomal protein L11. Recruited to stalled E.coli ribosomes by E.coli ArfA.

The protein resides in the cytoplasm. Functionally, peptide chain release factor 2 directs the termination of translation in response to the peptide chain termination codons UGA and UAA. In endogenous ribosomes interacts with P-site tRNA and 23S rRNA. In the presence of truncated mRNA in the 70S ribosome, ArfA and RF2 interact such that the GGQ peptide hydrolysis motif of RF2 rises into the peptidyl-transferase center and releases the ribosome. Recruited to stalled E.coli 70S ribosomes by E.coli ArfA, but cannot be functionally accomodated in the peptidyl-transferase center. Note T.thermophilus probably does not encode arfA. The chain is Peptide chain release factor RF2 (prfB) from Thermus thermophilus (strain ATCC 27634 / DSM 579 / HB8).